We begin with the raw amino-acid sequence, 389 residues long: PqqA peptide cyclase (389 aa).

Positions 19-234 (VGLPLWLLAE…TNEYRDQLAA (216 aa)) constitute a Radical SAM core domain. [4Fe-4S] cluster is bound by residues C33, C37, and C40.

The protein belongs to the radical SAM superfamily. PqqE family. In terms of assembly, interacts with PqqD. The interaction is necessary for activity of PqqE. [4Fe-4S] cluster serves as cofactor.

The catalysed reaction is [PQQ precursor protein] + S-adenosyl-L-methionine = E-Y cross-linked-[PQQ precursor protein] + 5'-deoxyadenosine + L-methionine + H(+). The protein operates within cofactor biosynthesis; pyrroloquinoline quinone biosynthesis. Functionally, catalyzes the cross-linking of a glutamate residue and a tyrosine residue in the PqqA protein as part of the biosynthesis of pyrroloquinoline quinone (PQQ). The polypeptide is PqqA peptide cyclase (Pseudomonas syringae pv. tomato (strain ATCC BAA-871 / DC3000)).